The chain runs to 489 residues: Probable guanine deaminase (489 aa).

Zn(2+)-binding residues include H100 and H102. Substrate contacts are provided by residues 102 to 105 (HVSQ), 231 to 232 (RF), 258 to 261 (HLSE), and D348. H258 and D348 together coordinate Zn(2+).

This sequence belongs to the metallo-dependent hydrolases superfamily. ATZ/TRZ family. Requires Zn(2+) as cofactor.

The protein resides in the cytoplasm. The catalysed reaction is guanine + H2O + H(+) = xanthine + NH4(+). Its pathway is purine metabolism; guanine degradation; xanthine from guanine: step 1/1. Catalyzes the hydrolytic deamination of guanine, producing xanthine and ammonia. The polypeptide is Probable guanine deaminase (GUD1) (Saccharomyces cerevisiae (strain ATCC 204508 / S288c) (Baker's yeast)).